A 226-amino-acid polypeptide reads, in one-letter code: MNENLFAPFITPTILGITTLPIIITFPCLILSSPKRWLPNRIQILQMWLIRLITKQMMTMHNKQGRTWTLMLMSLILFIASTNLLGLLPYSFTPTTQLSMNIGMAIPLWAGTVIMGFRNKPKMSLAHFLPQGTPTPLIPMLIIIETISLFIQPLALAVRLTANITAGHLLIHLIGSATLALSSISMTVSTITFSILFLLTLLEIAVAMIQAYVFTLLVSLYLHDNS.

6 helical membrane-spanning segments follow: residues 6 to 26, 68 to 88, 97 to 117, 138 to 158, 164 to 184, and 195 to 215; these read FAPF…IITF, WTLM…LGLL, QLSM…IMGF, IPML…ALAV, ITAG…LSSI, and ILFL…YVFT.

It belongs to the ATPase A chain family. As to quaternary structure, component of the ATP synthase complex composed at least of ATP5F1A/subunit alpha, ATP5F1B/subunit beta, ATP5MC1/subunit c (homooctomer), MT-ATP6/subunit a, MT-ATP8/subunit 8, ATP5ME/subunit e, ATP5MF/subunit f, ATP5MG/subunit g, ATP5MK/subunit k, ATP5MJ/subunit j, ATP5F1C/subunit gamma, ATP5F1D/subunit delta, ATP5F1E/subunit epsilon, ATP5PF/subunit F6, ATP5PB/subunit b, ATP5PD/subunit d, ATP5PO/subunit OSCP. ATP synthase complex consists of a soluble F(1) head domain (subunits alpha(3) and beta(3)) - the catalytic core - and a membrane F(0) domain - the membrane proton channel (subunits c, a, 8, e, f, g, k and j). These two domains are linked by a central stalk (subunits gamma, delta, and epsilon) rotating inside the F1 region and a stationary peripheral stalk (subunits F6, b, d, and OSCP). Interacts with DNAJC30; interaction is direct.

It is found in the mitochondrion inner membrane. The catalysed reaction is H(+)(in) = H(+)(out). Functionally, subunit a, of the mitochondrial membrane ATP synthase complex (F(1)F(0) ATP synthase or Complex V) that produces ATP from ADP in the presence of a proton gradient across the membrane which is generated by electron transport complexes of the respiratory chain. ATP synthase complex consist of a soluble F(1) head domain - the catalytic core - and a membrane F(1) domain - the membrane proton channel. These two domains are linked by a central stalk rotating inside the F(1) region and a stationary peripheral stalk. During catalysis, ATP synthesis in the catalytic domain of F(1) is coupled via a rotary mechanism of the central stalk subunits to proton translocation. With the subunit c (ATP5MC1), forms the proton-conducting channel in the F(0) domain, that contains two crucial half-channels (inlet and outlet) that facilitate proton movement from the mitochondrial intermembrane space (IMS) into the matrix. Protons are taken up via the inlet half-channel and released through the outlet half-channel, following a Grotthuss mechanism. This is ATP synthase F(0) complex subunit a from Didelphis virginiana (North American opossum).